The primary structure comprises 236 residues: Probable transcriptional activator protein TraR (236 aa).

The 66-residue stretch at 169 to 234 (VLNPKQMLSP…QLVAIAKDRG (66 aa)) folds into the HTH luxR-type domain. Residues 193-212 (ASVTANLTGINARTVQHYLD) constitute a DNA-binding region (H-T-H motif).

This sequence belongs to the autoinducer-regulated transcriptional regulatory protein family.

Functionally, positive regulation of conjugal transfer. TraR activates target genes in the presence of AAI and also activates traR and traI themselves. This is Probable transcriptional activator protein TraR (traR) from Sinorhizobium fredii (strain NBRC 101917 / NGR234).